Consider the following 358-residue polypeptide: Alanine racemase (358 aa).

Lys-35 functions as the Proton acceptor; specific for D-alanine in the catalytic mechanism. At Lys-35 the chain carries N6-(pyridoxal phosphate)lysine. Arg-130 is a substrate binding site. Catalysis depends on Tyr-255, which acts as the Proton acceptor; specific for L-alanine. Substrate is bound at residue Met-303.

This sequence belongs to the alanine racemase family. It depends on pyridoxal 5'-phosphate as a cofactor.

It carries out the reaction L-alanine = D-alanine. Its pathway is amino-acid biosynthesis; D-alanine biosynthesis; D-alanine from L-alanine: step 1/1. Functionally, catalyzes the interconversion of L-alanine and D-alanine. May also act on other amino acids. This chain is Alanine racemase (alr), found in Shewanella loihica (strain ATCC BAA-1088 / PV-4).